A 341-amino-acid chain; its full sequence is NADH-quinone oxidoreductase subunit H 2 (341 aa).

Transmembrane regions (helical) follow at residues 13–33 (IIVIGQSVLLLVLLLISIAYI), 82–102 (GVFLLAPLVTCVLALAAWAVI), 115–135 (VGVLYILAVSSLSVYGIIMAG), 161–181 (IGFVVICVLLCVGSLNLTAIV), 190–210 (MLGWYWLPLFPMFVVFYVSAL), 248–268 (YVAIVTMCAMGTILFLGGWLP), 277–297 (WVPGIVWFALKVLFMFFLFAM), and 317–337 (VFLPLSLAMVVIVAAVLQFAG).

This sequence belongs to the complex I subunit 1 family. As to quaternary structure, NDH-1 is composed of 14 different subunits. Subunits NuoA, H, J, K, L, M, N constitute the membrane sector of the complex.

The protein resides in the cell inner membrane. The catalysed reaction is a quinone + NADH + 5 H(+)(in) = a quinol + NAD(+) + 4 H(+)(out). In terms of biological role, NDH-1 shuttles electrons from NADH, via FMN and iron-sulfur (Fe-S) centers, to quinones in the respiratory chain. The immediate electron acceptor for the enzyme in this species is believed to be ubiquinone. Couples the redox reaction to proton translocation (for every two electrons transferred, four hydrogen ions are translocated across the cytoplasmic membrane), and thus conserves the redox energy in a proton gradient. This subunit may bind ubiquinone. The chain is NADH-quinone oxidoreductase subunit H 2 from Rhodopseudomonas palustris (strain BisB5).